The primary structure comprises 784 residues: Ubiquitin carboxyl-terminal hydrolase 1 (784 aa).

Disordered regions lie at residues 1–21 and 34–56; these read MPGV…SKKN and KRAL…RGSE. Positions 7–16 are enriched in polar residues; sequence SESNGLSRGS. Phosphoserine is present on residues serine 16 and serine 42. Residues 45–56 show a composition bias toward basic and acidic residues; that stretch reads NEEKTSEYRGSE. Serine 67 carries the post-translational modification Phosphoserine. Positions 81–784 constitute a USP domain; that stretch reads VGLNNLGNTC…TPYLLFYKKL (704 aa). Catalysis depends on cysteine 90, which acts as the Nucleophile. Basic and acidic residues-rich tracts occupy residues 233–243 and 252–264; these read VEEQSLQKEET and DSMR…KEQL. Disordered regions lie at residues 233–342 and 362–414; these read VEEQ…INWL and TTNQ…KSGN. Serine 474 carries the post-translational modification Phosphoserine. The Proton acceptor role is filled by histidine 592. Residues 684-725 are disordered; sequence NPDKVVGTPFTDNRNSETNDTTNGTHESDRNKESSDQTGVNM. Positions 693–708 are enriched in polar residues; sequence FTDNRNSETNDTTNGT. The span at 709–718 shows a compositional bias: basic and acidic residues; it reads HESDRNKESS. Phosphoserine is present on serine 767.

Belongs to the peptidase C19 family. In terms of assembly, interacts with FANCD2 and PCNA. Interacts with WDR48. Interacts with ATAD5; the interaction regulates USP1-mediated PCNA deubiquitination. In terms of processing, autocatalytic cleavage of USP1 following UV irradiation inactivates it, leading to an increase in ubiquitinated PCNA, recruitment of POLH and translesion synthesis. Ubiquitinated by the CRL2(KLHDC2) complex following autocatalytic cleavage, leading to its degradation: the CRL2(KLHDC2) complex recognizes the diglycine (Gly-Gly) at the C-terminus.

Its subcellular location is the nucleus. The enzyme catalyses Thiol-dependent hydrolysis of ester, thioester, amide, peptide and isopeptide bonds formed by the C-terminal Gly of ubiquitin (a 76-residue protein attached to proteins as an intracellular targeting signal).. In terms of biological role, negative regulator of DNA damage repair which specifically deubiquitinates monoubiquitinated FANCD2. Also involved in PCNA-mediated translesion synthesis (TLS) by deubiquitinating monoubiquitinated PCNA. Has almost no deubiquitinating activity by itself and requires the interaction with WDR48 to have a high activity. The sequence is that of Ubiquitin carboxyl-terminal hydrolase 1 from Mus musculus (Mouse).